Here is a 466-residue protein sequence, read N- to C-terminus: Ribulose bisphosphate carboxylase large chain (466 aa).

Lysine 4 is modified (N6,N6,N6-trimethyllysine). The substrate site is built by asparagine 113 and threonine 163. The Proton acceptor role is filled by lysine 165. Residue lysine 167 coordinates substrate. Mg(2+) contacts are provided by lysine 191, aspartate 193, and glutamate 194. Lysine 191 carries the post-translational modification N6-carboxylysine. Histidine 284 (proton acceptor) is an active-site residue. Substrate-binding residues include arginine 285, histidine 317, and serine 369.

It belongs to the RuBisCO large chain family. Type I subfamily. As to quaternary structure, heterohexadecamer of 8 large chains and 8 small chains; disulfide-linked. The disulfide link is formed within the large subunit homodimers. Requires Mg(2+) as cofactor. The disulfide bond which can form in the large chain dimeric partners within the hexadecamer appears to be associated with oxidative stress and protein turnover.

The protein resides in the plastid. It localises to the chloroplast. The enzyme catalyses 2 (2R)-3-phosphoglycerate + 2 H(+) = D-ribulose 1,5-bisphosphate + CO2 + H2O. It carries out the reaction D-ribulose 1,5-bisphosphate + O2 = 2-phosphoglycolate + (2R)-3-phosphoglycerate + 2 H(+). In terms of biological role, ruBisCO catalyzes two reactions: the carboxylation of D-ribulose 1,5-bisphosphate, the primary event in carbon dioxide fixation, as well as the oxidative fragmentation of the pentose substrate in the photorespiration process. Both reactions occur simultaneously and in competition at the same active site. The polypeptide is Ribulose bisphosphate carboxylase large chain (Proboscidea louisianica (Louisiana Devil's-claw)).